The primary structure comprises 598 residues: Protein VASCULAR ASSOCIATED DEATH 1, chloroplastic (598 aa).

Residues 1 to 11 are compositionally biased toward polar residues; the sequence is MAMLSTASVSG. The interval 1–64 is disordered; that stretch reads MAMLSTASVS…PSRGGDNQSE (64 aa). A chloroplast-targeting transit peptide spans 1–68; it reads MAMLSTASVS…GDNQSEVISK (68 aa). Asn-61 is a glycosylation site (N-linked (GlcNAc...) asparagine). Residues 70 to 134 enclose the GRAM domain; sequence EEYRQLFRLP…PFAEISCVKR (65 aa). The 173-residue stretch at 272-444 folds into the VASt domain; the sequence is DFTKVAEAKF…MAHELLKQKK (173 aa). 2 N-linked (GlcNAc...) asparagine glycosylation sites follow: Asn-329 and Asn-494. Residues 507–527 form a helical membrane-spanning segment; that stretch reads QVIVLAFAVILLMQVTIVVLL. Positions 553 to 595 form a coiled coil; it reads WLEKRMHFLREEMMMVEDRLQRMRQDHAALKAQFHHLERLLRR.

It localises to the membrane. The protein resides in the plastid. Its subcellular location is the chloroplast. Its function is as follows. Involved in ethylene- and salicylic acid-dependent cell death control associated with cells in the vicinity of vascular bundles. The protein is Protein VASCULAR ASSOCIATED DEATH 1, chloroplastic of Arabidopsis thaliana (Mouse-ear cress).